Consider the following 739-residue polypeptide: Phosphoribosylformylglycinamidine synthase subunit PurL (739 aa).

H54 is an active-site residue. 2 residues coordinate ATP: Y57 and K96. E98 is a binding site for Mg(2+). Residues 99–102 (SHNH) and R121 each bind substrate. H100 acts as the Proton acceptor in catalysis. D122 is a binding site for Mg(2+). A substrate-binding site is contributed by Q245. Residue D275 participates in Mg(2+) binding. 319-321 (ESQ) provides a ligand contact to substrate. ATP-binding residues include D504 and G541. N542 lines the Mg(2+) pocket. Residue S544 coordinates substrate.

The protein belongs to the FGAMS family. Monomer. Part of the FGAM synthase complex composed of 1 PurL, 1 PurQ and 2 PurS subunits.

It localises to the cytoplasm. The catalysed reaction is N(2)-formyl-N(1)-(5-phospho-beta-D-ribosyl)glycinamide + L-glutamine + ATP + H2O = 2-formamido-N(1)-(5-O-phospho-beta-D-ribosyl)acetamidine + L-glutamate + ADP + phosphate + H(+). It participates in purine metabolism; IMP biosynthesis via de novo pathway; 5-amino-1-(5-phospho-D-ribosyl)imidazole from N(2)-formyl-N(1)-(5-phospho-D-ribosyl)glycinamide: step 1/2. Functionally, part of the phosphoribosylformylglycinamidine synthase complex involved in the purines biosynthetic pathway. Catalyzes the ATP-dependent conversion of formylglycinamide ribonucleotide (FGAR) and glutamine to yield formylglycinamidine ribonucleotide (FGAM) and glutamate. The FGAM synthase complex is composed of three subunits. PurQ produces an ammonia molecule by converting glutamine to glutamate. PurL transfers the ammonia molecule to FGAR to form FGAM in an ATP-dependent manner. PurS interacts with PurQ and PurL and is thought to assist in the transfer of the ammonia molecule from PurQ to PurL. In Lactococcus lactis subsp. lactis (strain IL1403) (Streptococcus lactis), this protein is Phosphoribosylformylglycinamidine synthase subunit PurL.